The sequence spans 1835 residues: AT-rich interactive domain-containing protein 2 (1835 aa).

Ala-2 carries the post-translational modification N-acetylalanine. Ser-4 carries the phosphoserine modification. Residues Lys-7, Lys-15, and Lys-119 each participate in a glycyl lysine isopeptide (Lys-Gly) (interchain with G-Cter in SUMO2) cross-link. The ARID domain maps to 13 to 105 (RRKGLAFLDE…YLEKYEKVHH (93 aa)). Positions 313–317 (LRFLL) match the LXXLL motif. The RFX-type winged-helix DNA-binding region spans 524-603 (ACQWLNAHFE…IHVVGVKRRA (80 aa)). Lys-555 participates in a covalent cross-link: Glycyl lysine isopeptide (Lys-Gly) (interchain with G-Cter in SUMO2). Ser-631 and Ser-635 each carry phosphoserine. Thr-653 carries the phosphothreonine modification. Ser-689 is subject to Phosphoserine. Thr-692 carries the phosphothreonine modification. Disordered stretches follow at residues 819–844 (QQLI…QSQD), 962–1057 (LTGQ…SGES), 1266–1287 (MENP…KENE), 1295–1314 (NGRK…KIQS), and 1321–1341 (LISN…KQNS). Composition is skewed to low complexity over residues 823-843 (TTSP…SQSQ), 985-996 (PTAMSSSSTPQS), and 1025-1044 (QVQV…QPQQ). Ser-1300 is subject to Phosphoserine. A compositionally biased stretch (polar residues) spans 1301–1314 (DSSLPPSNSGKIQS). Phosphoserine is present on residues Ser-1391 and Ser-1496. 2 disordered regions span residues 1488–1522 (DSGS…AEDT) and 1572–1629 (SAVQ…RKPG). Polar residues predominate over residues 1491–1509 (SKVSHSPALSSDVRSTNGT). A compositionally biased stretch (basic and acidic residues) spans 1513–1522 (KTVKRPAEDT). Positions 1573 to 1592 (AVQQKQQHPPTYVQNVVPQN) are enriched in polar residues. The segment covering 1602 to 1623 (QVQGQPNSSQPSPFSGSSQPGD) has biased composition (low complexity). The segment at 1632–1657 (FMCLWQSCKKWFQTPSQVFYHAATEH) adopts a C2H2-type zinc-finger fold. Residues Lys-1701, Lys-1716, and Lys-1731 each participate in a glycyl lysine isopeptide (Lys-Gly) (interchain with G-Cter in SUMO2) cross-link. The segment at 1703–1728 (DEPGQAGSQKSSTKQPTVGGTSSTPR) is disordered. Residues 1708–1728 (AGSQKSSTKQPTVGGTSSTPR) show a composition bias toward polar residues.

As to quaternary structure, component of the SWI/SNF-B (PBAF) chromatin remodeling complex, at least composed of SMARCA4/BRG1, SMARCB1/BAF47/SNF5, ACTL6A/BAF53A or ACTL6B/BAF53B, SMARCE1/BAF57, SMARCD1/BAF60A, SMARCD2/BAF60B, perhaps SMARCD3/BAF60C, SMARCC1/BAF155, SMARCC2/BAF170, PBRM1/BAF180, ARID2/BAF200 and actin. Interacts with SRF. Forms complexes with SRF and SRF cofactors MYOCD, NKX2-5 and SRFBP1. In terms of tissue distribution, highly expressed in heart.

Its subcellular location is the nucleus. Its function is as follows. Involved in transcriptional activation and repression of select genes by chromatin remodeling (alteration of DNA-nucleosome topology). Required for the stability of the SWI/SNF chromatin remodeling complex SWI/SNF-B (PBAF). May be involved in targeting the complex to different genes. May be involved in regulating transcriptional activation of cardiac genes. The chain is AT-rich interactive domain-containing protein 2 from Homo sapiens (Human).